The chain runs to 401 residues: tRNA(Met) cytidine acetate ligase (401 aa).

Residues 7 to 20 (IVEYNPFHNGHLYH), glycine 101, asparagine 160, and 185 to 186 (RI) contribute to the ATP site.

It belongs to the TmcAL family.

The protein resides in the cytoplasm. The enzyme catalyses cytidine(34) in elongator tRNA(Met) + acetate + ATP = N(4)-acetylcytidine(34) in elongator tRNA(Met) + AMP + diphosphate. Its function is as follows. Catalyzes the formation of N(4)-acetylcytidine (ac(4)C) at the wobble position of elongator tRNA(Met), using acetate and ATP as substrates. First activates an acetate ion to form acetyladenylate (Ac-AMP) and then transfers the acetyl group to tRNA to form ac(4)C34. The chain is tRNA(Met) cytidine acetate ligase from Geobacillus sp. (strain WCH70).